The sequence spans 2204 residues: Non-reducing polyketide synthase CTB1 (2204 aa).

An N-terminal acylcarrier protein transacylase domain (SAT) region spans residues 11–250 (AFGDQTYDCS…TRLPITAPYH (240 aa)). The region spanning 382 to 815 (KSPIAILAAS…GGNTCLVLED (434 aa)) is the Ketosynthase family 3 (KS3) domain. Active-site for beta-ketoacyl synthase activity residues include C554, H689, and H734. Residues 923-1224 (AFTGQGSAFE…QTFASINKDK (302 aa)) form a malonyl-CoA:ACP transacylase (MAT) domain region. Residues 1299–1619 (SSSIHKVITN…VPKRLMHYIV (321 aa)) form a product template (PT) domain region. The segment at 1303 to 1439 (HKVITNTITA…CKIRFGSLEK (137 aa)) is N-terminal hotdog fold. The region spanning 1303–1616 (HKVITNTITA…LQGVPKRLMH (314 aa)) is the PKS/mFAS DH domain. The Proton acceptor; for dehydratase activity role is filled by H1336. Residues 1468–1616 (TYRFSKGMIY…LQGVPKRLMH (149 aa)) are C-terminal hotdog fold. The active-site Proton donor; for dehydratase activity is the D1528. A disordered region spans residues 1625–1674 (KASGPPTEKKGSSPPVEKKASAPVAPTRPAIQRKNASIPPPATQVTPQNK). Basic and acidic residues predominate over residues 1631–1644 (TEKKGSSPPVEKKA). Carrier domains follow at residues 1679–1756 (PSVS…TRLS) and 1783–1865 (DPSP…SGST). S1716 and S1824 each carry O-(pantetheine 4'-phosphoryl)serine. The segment covering 1864–1875 (STESFDSTTTKP) has biased composition (polar residues). The interval 1864–1931 (STESFDSTTT…PPKGRIPPAW (68 aa)) is disordered. Low complexity predominate over residues 1880–1895 (ATPPLTDSSASSPPSS). Residues 1945–2195 (ILFLFPDGAG…SGAQMLVEHM (251 aa)) are thioesterase (TE) domain.

It depends on pantetheine 4'-phosphate as a cofactor.

It catalyses the reaction 6 malonyl-CoA + acetyl-CoA + 6 H(+) = nor-toralactone + 6 CO2 + 7 CoA + 2 H2O. Its pathway is mycotoxin biosynthesis. Its function is as follows. Polyketide synthase; part of the gene cluster that mediates the biosynthesis of cercosporin, a light-activated, non-host-selective toxin. The perylenequinone chromophore of cercosporin absorbs light energy to attain an electronically-activated triplet state and produces active oxygen species such as the hydroxyl radical, superoxide, hydrogen peroxide or singlet oxygen upon reaction with oxygen molecules. These reactive oxygen species cause damage to various cellular components including lipids, proteins and nucleic acids. The first step of cercosporin biosynthesis is performed by the polyketide synthase CTB1 which catalyzes the formation of nor-toralactone. The starter unit acyltransferase (SAT) domain of CTB1 initiates polyketide extension by the selective utilization of acetyl-CoA, which is elongated to the heptaketide in the beta-ketoacyl synthase (KS) domain by successive condensations with six malonyl units introduced by the malonyl acyltransferase (MAT) domain. The product template (PT) domain catalyzes C4-C9 and C2-C11 aldol cyclizations and dehydrations to a trihydroxynaphthalene, which is thought to be delivered to the thioesterase (TE) domain for product release. The bifunctional enzyme CTB3 then methylates nor-toralactone to toralactone before conducting an unusual oxidative aromatic ring opening. The O-methyltransferase CTB2 further methylates the nascent OH-6 of the CBT3 product, blocking further oxidation at this site before the reductase CTB6 reduces the 2-oxopropyl ketone at position C7, giving naphthalene. The FAD-dependent monooxygenase CTB5 in concert with the multicopper oxidase CTB12 are responsible for homodimerization of naphthalene with CTB7 installing the dioxepine moiety, finally producing cercosporin. The fasciclin domain-containing protein CTB11 might act with CTB5 and CTB12 whereas the roles of CTB9 and CTB10 have still to be elucidated. The protein is Non-reducing polyketide synthase CTB1 of Cercospora beticola (Sugarbeet leaf spot fungus).